The chain runs to 299 residues: DNA-binding transcriptional activator HetR (299 aa).

The segment at 1 to 98 is DNA-binding domain; that stretch reads MSNDIDLIKR…GKLLKTLGSQ (98 aa). DNA is bound by residues 34-40 and 60-76; these read RHGAFLD and NLRM…KRVK. A flap domain region spans residues 99 to 216; it reads EPRYLIQFPY…FYALTRPFYA (118 aa). The active site involves Ser152. 179–181 lines the DNA pocket; the sequence is SEA. The tract at residues 217-299 is hood domain; that stretch reads PADDQERTYI…LQMVFGRKED (83 aa).

This sequence belongs to the peptidase S48 family. Upon expression in E.coli most protein is monomeric, although varying amounts of homodimer can be seen. Homodimer; disulfide-linked. Homodimer. Binds the 6 residue C-terminal peptide of PatS; one peptide binds to each subunit. In bacterial two-hybrid assays interacts robustly with itself, Alr2902 and Alr3234 and more weakly with Als1930. Probably autodegrades.

Its activity is regulated as follows. Protease activity is inhibited by PMSF, suggesting this is a serine protease. Controls heterocyst differentiation. Dimerization is required for DNA-binding. Has both a protease and a DNA-binding activity. Functionally, controls heterocyst differentiation; increased expression leads to more heterocysts than usual. Has protease activity. Binds the promoter regions of hetR, hepA and patS and is required for their expression. Dimerization is required for DNA-binding, DNA-binding is inhibited by the PatS6 peptide. Binds the inverted repeat 5'-GTAGGCGAGGGGTCTAACCCCTCATTACC-3' found in the hetP promoter, required for expression of hetP. The polypeptide is DNA-binding transcriptional activator HetR (Nostoc sp. (strain PCC 7120 / SAG 25.82 / UTEX 2576)).